The primary structure comprises 300 residues: Protoheme IX farnesyltransferase (300 aa).

9 helical membrane passes run 31-51 (VMSLVVFTGFSGMWLAPNSLH), 52-72 (PFISVIALICIAIGAGSAGAI), 92-112 (IVRGAIEADEALSFGLIMAFF), 123-145 (FLSALLLLFTIFYYICIYTMWLK), 152-172 (IVIGGAAGALPPVIGYASVSG), 179-199 (VILFLIIFIWTPPHSWALALF), 225-245 (ILIYSVLLFLTSLMPFFVGMS), 247-267 (IIYLVIAAVLGLVFLYYSISL), and 280-300 (FFAYSIFYLFFIFLLLDFCRV).

The protein belongs to the UbiA prenyltransferase family. Protoheme IX farnesyltransferase subfamily.

The protein localises to the cell inner membrane. The enzyme catalyses heme b + (2E,6E)-farnesyl diphosphate + H2O = Fe(II)-heme o + diphosphate. Its pathway is porphyrin-containing compound metabolism; heme O biosynthesis; heme O from protoheme: step 1/1. Functionally, converts heme B (protoheme IX) to heme O by substitution of the vinyl group on carbon 2 of heme B porphyrin ring with a hydroxyethyl farnesyl side group. In Rickettsia bellii (strain OSU 85-389), this protein is Protoheme IX farnesyltransferase.